A 1150-amino-acid polypeptide reads, in one-letter code: Cohesin subunit SCC3 (1150 aa).

The segment covering 1–12 (MTAVRRSTRIRT) has biased composition (basic residues). The disordered stretch occupies residues 1-122 (MTAVRRSTRI…PAYHRSKKDQ (122 aa)). S28 carries the post-translational modification Phosphoserine. Over residues 32-43 (VESDKITAKTQH) the composition is skewed to basic and acidic residues. Acidic residues predominate over residues 44-72 (EEEEEQDTGESEESSSEDDYEDQDDDDYV). Residues 77 to 87 (AKRKSRKRKPK) are compositionally biased toward basic residues. Positions 305 to 349 (LTQQAVNLEKNYLAKLSKQLSLEEKKKRPNNKTLEKLESTIAETQ) form a coiled coil. Residues 367–457 (FVHRYKDVSD…ERFKTKILEV (91 aa)) enclose the SCD domain. Residue S628 is modified to Phosphoserine. A disordered region spans residues 1065–1150 (ENPEPNKKNI…IDNSDEITQD (86 aa)). Residues 1083–1101 (QREKAPLQPNSERETDHAN) are compositionally biased toward basic and acidic residues.

This sequence belongs to the SCC3 family. Interacts directly with MCD1 in cohesin complex. Cohesin complexes are composed of the SMC1 and SMC3 heterodimer attached via their hinge domain, MCD1 which link them, and IRR1/SCC3, which interacts with MCD1. The cohesin complex also interacts with SCC2, which is required for its association with chromosomes. Interacts with LIN1. In terms of processing, acetylated by ECO1.

The protein localises to the nucleus. It localises to the chromosome. The protein resides in the centromere. Its function is as follows. Component of cohesin complex, a complex required for the cohesion of sister chromatids after DNA replication. The cohesin complex apparently forms a large proteinaceous ring within which sister chromatids can be trapped. At anaphase, the MCD1/SCC1 subunit of the complex is cleaved and dissociates from chromatin, allowing sister chromatids to segregate. The cohesin complex may also play a role in spindle pole assembly during mitosis. The protein is Cohesin subunit SCC3 (IRR1) of Saccharomyces cerevisiae (strain ATCC 204508 / S288c) (Baker's yeast).